Reading from the N-terminus, the 82-residue chain is uncharacterized protein (82 aa).

This is an uncharacterized protein from Anabaena cylindrica.